The chain runs to 279 residues: 3-methyl-2-oxobutanoate hydroxymethyltransferase (279 aa).

Mg(2+) is bound by residues aspartate 43 and aspartate 82. 3-methyl-2-oxobutanoate contacts are provided by residues 43–44, aspartate 82, and lysine 112; that span reads DS. Glutamate 114 is a Mg(2+) binding site. Glutamate 181 (proton acceptor) is an active-site residue.

It belongs to the PanB family. As to quaternary structure, homodecamer; pentamer of dimers. Mg(2+) serves as cofactor.

It is found in the cytoplasm. The catalysed reaction is 3-methyl-2-oxobutanoate + (6R)-5,10-methylene-5,6,7,8-tetrahydrofolate + H2O = 2-dehydropantoate + (6S)-5,6,7,8-tetrahydrofolate. It functions in the pathway cofactor biosynthesis; (R)-pantothenate biosynthesis; (R)-pantoate from 3-methyl-2-oxobutanoate: step 1/2. Functionally, catalyzes the reversible reaction in which hydroxymethyl group from 5,10-methylenetetrahydrofolate is transferred onto alpha-ketoisovalerate to form ketopantoate. The chain is 3-methyl-2-oxobutanoate hydroxymethyltransferase from Lysinibacillus sphaericus (strain C3-41).